Consider the following 116-residue polypeptide: uncharacterized protein (116 aa).

The helical transmembrane segment at 20-42 (YLNKYYSVITYFLAFLTKFAILL) threads the bilayer. The tract at residues 95–116 (IEFQSKSSPVPPASESNKGINE) is disordered.

Its subcellular location is the membrane. This is an uncharacterized protein from Saccharomyces cerevisiae (strain ATCC 204508 / S288c) (Baker's yeast).